A 310-amino-acid chain; its full sequence is N-acetyl-gamma-glutamyl-phosphate reductase (310 aa).

Cys117 is a catalytic residue.

It belongs to the NAGSA dehydrogenase family. Type 2 subfamily.

The protein resides in the cytoplasm. The catalysed reaction is N-acetyl-L-glutamate 5-semialdehyde + phosphate + NADP(+) = N-acetyl-L-glutamyl 5-phosphate + NADPH + H(+). The protein operates within amino-acid biosynthesis; L-arginine biosynthesis; N(2)-acetyl-L-ornithine from L-glutamate: step 3/4. Functionally, catalyzes the NADPH-dependent reduction of N-acetyl-5-glutamyl phosphate to yield N-acetyl-L-glutamate 5-semialdehyde. The sequence is that of N-acetyl-gamma-glutamyl-phosphate reductase from Rhizobium etli (strain ATCC 51251 / DSM 11541 / JCM 21823 / NBRC 15573 / CFN 42).